Here is a 232-residue protein sequence, read N- to C-terminus: Orotidine 5'-phosphate decarboxylase (232 aa).

Substrate contacts are provided by residues D11, K32, 59–68 (DLKLHDIPHT), T116, R178, Q188, G208, and R209. K61 functions as the Proton donor in the catalytic mechanism.

The protein belongs to the OMP decarboxylase family. Type 1 subfamily. As to quaternary structure, homodimer.

It carries out the reaction orotidine 5'-phosphate + H(+) = UMP + CO2. Its pathway is pyrimidine metabolism; UMP biosynthesis via de novo pathway; UMP from orotate: step 2/2. Its function is as follows. Catalyzes the decarboxylation of orotidine 5'-monophosphate (OMP) to uridine 5'-monophosphate (UMP). The protein is Orotidine 5'-phosphate decarboxylase of Synechococcus sp. (strain JA-3-3Ab) (Cyanobacteria bacterium Yellowstone A-Prime).